The chain runs to 375 residues: Acetylornithine aminotransferase (375 aa).

Pyridoxal 5'-phosphate-binding positions include 93–94 (GT) and phenylalanine 120. Arginine 123 provides a ligand contact to N(2)-acetyl-L-ornithine. Position 205-208 (205-208 (DEVQ)) interacts with pyridoxal 5'-phosphate. N6-(pyridoxal phosphate)lysine is present on lysine 234. Threonine 262 contacts N(2)-acetyl-L-ornithine. Residue threonine 263 participates in pyridoxal 5'-phosphate binding.

The protein belongs to the class-III pyridoxal-phosphate-dependent aminotransferase family. ArgD subfamily. In terms of assembly, homodimer. Pyridoxal 5'-phosphate is required as a cofactor.

Its subcellular location is the cytoplasm. The enzyme catalyses N(2)-acetyl-L-ornithine + 2-oxoglutarate = N-acetyl-L-glutamate 5-semialdehyde + L-glutamate. It participates in amino-acid biosynthesis; L-arginine biosynthesis; N(2)-acetyl-L-ornithine from L-glutamate: step 4/4. This Staphylococcus epidermidis (strain ATCC 12228 / FDA PCI 1200) protein is Acetylornithine aminotransferase.